Here is a 461-residue protein sequence, read N- to C-terminus: Phosphoglycerate kinase, chloroplastic (461 aa).

A chloroplast-targeting transit peptide spans 1 to 60 (MALSMKMRANARVSGRRVAAVAPRVVPFSSASSSVLRSGFALRCLWTSAAWAALASVVEA). A82, D83, N85, R100, S122, H123, G125, R126, R182, H214, and R215 together coordinate (2R)-3-phosphoglycerate. G260 is a binding site for ADP. G260 provides a ligand contact to CDP. The AMP site is built by K262 and K266. K266 provides a ligand contact to ATP. G284 contributes to the ADP binding site. G284 contributes to the CDP binding site. G285 and G357 together coordinate AMP. Positions 285 and 357 each coordinate ATP. The CDP site is built by G382 and F387. Position 387 (F387) interacts with ADP. E388 contacts AMP. ATP-binding residues include E388, D419, and S420. D419 is a Mg(2+) binding site.

It belongs to the phosphoglycerate kinase family. Monomer. The cofactor is Mg(2+).

Its subcellular location is the plastid. It localises to the chloroplast. It catalyses the reaction (2R)-3-phosphoglycerate + ATP = (2R)-3-phospho-glyceroyl phosphate + ADP. Its pathway is carbohydrate biosynthesis; Calvin cycle. The protein is Phosphoglycerate kinase, chloroplastic of Chlamydomonas reinhardtii (Chlamydomonas smithii).